Consider the following 363-residue polypeptide: tRNA/tmRNA (uracil-C(5))-methyltransferase (363 aa).

S-adenosyl-L-methionine contacts are provided by Gln-187, Tyr-215, Asn-220, Glu-236, and Asp-296. Catalysis depends on Cys-321, which acts as the Nucleophile. Catalysis depends on Glu-355, which acts as the Proton acceptor.

Belongs to the class I-like SAM-binding methyltransferase superfamily. RNA M5U methyltransferase family. TrmA subfamily.

It catalyses the reaction uridine(54) in tRNA + S-adenosyl-L-methionine = 5-methyluridine(54) in tRNA + S-adenosyl-L-homocysteine + H(+). It carries out the reaction uridine(341) in tmRNA + S-adenosyl-L-methionine = 5-methyluridine(341) in tmRNA + S-adenosyl-L-homocysteine + H(+). Dual-specificity methyltransferase that catalyzes the formation of 5-methyluridine at position 54 (m5U54) in all tRNAs, and that of position 341 (m5U341) in tmRNA (transfer-mRNA). The chain is tRNA/tmRNA (uracil-C(5))-methyltransferase from Pseudomonas fluorescens.